Here is a 247-residue protein sequence, read N- to C-terminus: MRLIQNMCTIAEYPAPGSTAADCCLGAAGRRLVKIAVVGASGVGKTALVVRFLTKRFIGDYERNAGNLYTRQVHIEGETLAIQVQDTPGIQVHENGLSCSEQLNRCIRWADAVVLVFSITDHKSYELISQLHQHVQQLHPGTRLPVVLVANKADLLHVKQVDPQLGLQLASMLGCSFYEVSVSENYNDVYNAFHVLCKEVSPKQQPSSTPEKRRTSLIPRPKSPNMQDLKRRFKQALSAKVRTVTSV.

The segment at 28–245 (AGRRLVKIAV…ALSAKVRTVT (218 aa)) is small GTPase-like. Residues 39 to 46 (GASGVGKT), 86 to 93 (DTPGIQVH), and 151 to 154 (NKAD) each bind GTP. Residues 202 to 228 (PKQQPSSTPEKRRTSLIPRPKSPNMQD) are disordered.

The protein belongs to the small GTPase superfamily. Ras family.

It catalyses the reaction GTP + H2O = GDP + phosphate + H(+). This is Ras-like protein family member 11B from Mus musculus (Mouse).